Reading from the N-terminus, the 333-residue chain is MLRTLRPTLPSRCLRLYSTAPEKPSLKLVAELRKRTEVSIVKAREALSASNNDIEAALQWLAKDLETTGAKKAAKVGGRTTNEGLVSVSILSNFTASGLQRGIRAAMIELNCETDFVGRNELFGRLAGDIAHTAAVVAEPGASVFQNLSLEFLQEAPLVSRSDPTSAPSGTVATTIRDTIAKVGENITLRRALVVAAEPPAADAAQALRLGQYVHGTIHQPTEGRIGTLALLGLKYPSPKGFTQETTEKLASLERALARQIVGFPTQSIKGSEETALYSQPFMMLPGELNSRPVGEALQAWSVQQGIVGSEGDAGAVEVLEFAKWSVGEPLES.

Residues 1-17 (MLRTLRPTLPSRCLRLY) constitute a mitochondrion transit peptide.

It belongs to the EF-Ts family.

Its subcellular location is the mitochondrion. Functionally, associates with the EF-Tu.GDP complex and induces the exchange of GDP to GTP. It remains bound to the aminoacyl-tRNA.EF-Tu.GTP complex up to the GTP hydrolysis stage on the ribosome. In Coprinopsis cinerea (strain Okayama-7 / 130 / ATCC MYA-4618 / FGSC 9003) (Inky cap fungus), this protein is Elongation factor Ts, mitochondrial.